The chain runs to 127 residues: Aspartate 1-decarboxylase (127 aa).

The Schiff-base intermediate with substrate; via pyruvic acid role is filled by serine 25. At serine 25 the chain carries Pyruvic acid (Ser). Threonine 57 provides a ligand contact to substrate. Tyrosine 58 functions as the Proton donor in the catalytic mechanism. Residue 73-75 participates in substrate binding; that stretch reads GAA.

Belongs to the PanD family. Heterooctamer of four alpha and four beta subunits. Pyruvate is required as a cofactor. Post-translationally, is synthesized initially as an inactive proenzyme, which is activated by self-cleavage at a specific serine bond to produce a beta-subunit with a hydroxyl group at its C-terminus and an alpha-subunit with a pyruvoyl group at its N-terminus.

It localises to the cytoplasm. It carries out the reaction L-aspartate + H(+) = beta-alanine + CO2. The protein operates within cofactor biosynthesis; (R)-pantothenate biosynthesis; beta-alanine from L-aspartate: step 1/1. Catalyzes the pyruvoyl-dependent decarboxylation of aspartate to produce beta-alanine. The sequence is that of Aspartate 1-decarboxylase from Geobacillus sp. (strain WCH70).